A 253-amino-acid chain; its full sequence is Triosephosphate isomerase (253 aa).

A substrate-binding site is contributed by 9–11; it reads NWK. His95 acts as the Electrophile in catalysis. Glu167 acts as the Proton acceptor in catalysis. Residues Gly173, Ser213, and 234–235 each bind substrate; that span reads GG. A Phosphoserine modification is found at Ser213.

Belongs to the triosephosphate isomerase family. In terms of assembly, homodimer.

It is found in the cytoplasm. The enzyme catalyses D-glyceraldehyde 3-phosphate = dihydroxyacetone phosphate. The protein operates within carbohydrate biosynthesis; gluconeogenesis. It participates in carbohydrate degradation; glycolysis; D-glyceraldehyde 3-phosphate from glycerone phosphate: step 1/1. Involved in the gluconeogenesis. Catalyzes stereospecifically the conversion of dihydroxyacetone phosphate (DHAP) to D-glyceraldehyde-3-phosphate (G3P). This is Triosephosphate isomerase from Bacillus velezensis (strain DSM 23117 / BGSC 10A6 / LMG 26770 / FZB42) (Bacillus amyloliquefaciens subsp. plantarum).